The chain runs to 250 residues: Isoprenyl transferase (250 aa).

The active site involves D26. Residue D26 participates in Mg(2+) binding. Residues 27–30, W31, R39, H43, and 71–73 contribute to the substrate site; these read GNGR and STE. Residue N74 is the Proton acceptor of the active site. Substrate is bound by residues W75, R77, R198, and 204 to 206; that span reads RLS. Residue E217 coordinates Mg(2+).

Belongs to the UPP synthase family. Homodimer. It depends on Mg(2+) as a cofactor.

In terms of biological role, catalyzes the condensation of isopentenyl diphosphate (IPP) with allylic pyrophosphates generating different type of terpenoids. The protein is Isoprenyl transferase of Streptococcus agalactiae serotype V (strain ATCC BAA-611 / 2603 V/R).